The chain runs to 72 residues: NAD(P)H-quinone oxidoreductase subunit O (72 aa).

The protein belongs to the complex I NdhO subunit family. As to quaternary structure, NDH-1 can be composed of about 15 different subunits; different subcomplexes with different compositions have been identified which probably have different functions.

The protein localises to the cellular thylakoid membrane. It carries out the reaction a plastoquinone + NADH + (n+1) H(+)(in) = a plastoquinol + NAD(+) + n H(+)(out). The catalysed reaction is a plastoquinone + NADPH + (n+1) H(+)(in) = a plastoquinol + NADP(+) + n H(+)(out). Functionally, NDH-1 shuttles electrons from an unknown electron donor, via FMN and iron-sulfur (Fe-S) centers, to quinones in the respiratory and/or the photosynthetic chain. The immediate electron acceptor for the enzyme in this species is believed to be plastoquinone. Couples the redox reaction to proton translocation, and thus conserves the redox energy in a proton gradient. Cyanobacterial NDH-1 also plays a role in inorganic carbon-concentration. This is NAD(P)H-quinone oxidoreductase subunit O from Trichodesmium erythraeum (strain IMS101).